The primary structure comprises 490 residues: ATP synthase subunit beta, chloroplastic (490 aa).

170–177 lines the ATP pocket; the sequence is GGAGVGKT.

The protein belongs to the ATPase alpha/beta chains family. As to quaternary structure, F-type ATPases have 2 components, CF(1) - the catalytic core - and CF(0) - the membrane proton channel. CF(1) has five subunits: alpha(3), beta(3), gamma(1), delta(1), epsilon(1). CF(0) has four main subunits: a(1), b(1), b'(1) and c(9-12).

It localises to the plastid. It is found in the chloroplast thylakoid membrane. It catalyses the reaction ATP + H2O + 4 H(+)(in) = ADP + phosphate + 5 H(+)(out). Its function is as follows. Produces ATP from ADP in the presence of a proton gradient across the membrane. The catalytic sites are hosted primarily by the beta subunits. In Pinus koraiensis (Korean pine), this protein is ATP synthase subunit beta, chloroplastic.